The following is an 87-amino-acid chain: MSRSAKKGAFVDAHLLKKVIDMNKQEKKRPIKTWSRRSTIFPEFVGNTFAVHNGKTFINVYVTDDMVGHKLGEFSPTRNFKQHTANR.

This sequence belongs to the universal ribosomal protein uS19 family.

Protein S19 forms a complex with S13 that binds strongly to the 16S ribosomal RNA. This is Small ribosomal subunit protein uS19 (rpsS) from Mycoplasma pneumoniae (strain ATCC 29342 / M129 / Subtype 1) (Mycoplasmoides pneumoniae).